Here is a 427-residue protein sequence, read N- to C-terminus: ATP-dependent RNA helicase DDX39A (427 aa).

The segment covering 1-19 (MAEQDVENELLDYDEDEEP) has biased composition (acidic residues). Positions 1–36 (MAEQDVENELLDYDEDEEPQAPQESTPAPPKKDVKG) are disordered. Ala-2 is modified (N-acetylalanine). Residue Lys-31 forms a Glycyl lysine isopeptide (Lys-Gly) (interchain with G-Cter in SUMO2) linkage. Lys-35 carries the post-translational modification N6-acetyllysine; alternate. A Glycyl lysine isopeptide (Lys-Gly) (interchain with G-Cter in SUMO2); alternate cross-link involves residue Lys-35. Ser-37 is subject to Phosphoserine. Residues 44-72 (SGFRDFLLKPELLRAIVDCGFEHPSEVQH) carry the Q motif motif. The region spanning 75–248 (IPQAILGMDV…RKFMQDPMEV (174 aa)) is the Helicase ATP-binding domain. 88-95 (AKSGMGKT) serves as a coordination point for ATP. Residues Lys-154 and Lys-162 each participate in a glycyl lysine isopeptide (Lys-Gly) (interchain with G-Cter in SUMO2) cross-link. Thr-171 is modified (phosphothreonine). The DECD box signature appears at 195-198 (DECD). Glycyl lysine isopeptide (Lys-Gly) (interchain with G-Cter in SUMO2) cross-links involve residues Lys-240 and Lys-255. In terms of domain architecture, Helicase C-terminal spans 260–421 (GLQQYYVKLK…ELPEEIDIST (162 aa)). Ser-426 carries the phosphoserine modification.

This sequence belongs to the DEAD box helicase family. DECD subfamily. Binds ALYREF/THOC4 and DDX39B/BAT1. Interacts with the apo-AREX complex component SARNP. Interacts with MX1. Interacts with MCM3AP isoform GANP. Interacts with ECD. Interacts with PHAX; this interaction stimulates PHAX RNA binding activity. In terms of processing, SUMOylated by RANBP2; SUMOylation modification affects its ability to bind RNA.

It is found in the nucleus. Its subcellular location is the cytoplasm. It catalyses the reaction ATP + H2O = ADP + phosphate + H(+). In terms of biological role, helicase that plays an essential role in mRNA export and is involved in multiple steps in RNA metabolism including alternative splicing. Regulates nuclear mRNA export to the cytoplasm through association with ECD. Also involved in spliceosomal uridine-rich small nuclear RNA (U snRNA) export by stimulating the RNA binding of adapter PHAX. Plays a role in the negative regulation of type I IFN production by increasing the nuclear retention of antiviral transcripts and thus reducing their protein expression. Independently of the interferon pathway, plays an antiviral role against alphaviruses by binding to a 5' conserved sequence element in the viral genomic RNA. The polypeptide is ATP-dependent RNA helicase DDX39A (Mus musculus (Mouse)).